The sequence spans 251 residues: Seminal metalloprotease 1 (251 aa).

Residues 1–18 (MFPQIWGVIFLFTPTVFS) form the signal peptide. A Peptidase M12A domain is found at 44 to 248 (NGIVNQIYHW…RKLNKMYRCP (205 aa)). Residues Asn-55 and Asn-120 are each glycosylated (N-linked (GlcNAc...) asparagine). 2 cysteine pairs are disulfide-bonded: Cys-87–Cys-247 and Cys-111–Cys-136. Residue His-144 coordinates Zn(2+). Glu-145 is an active-site residue. 2 residues coordinate Zn(2+): His-148 and His-154. N-linked (GlcNAc...) asparagine glycosylation is present at Asn-185.

Requires Zn(2+) as cofactor. Post-translationally, undergoes cleavage in the male during mating with a cleaved product detected in the ejaculatory duct and/or bulb of males by 8-10 minutes after the start of mating. Further cleavage occurs in the mated female. May undergo cleavage in a two-step process where it is first cleaved by Sems, making it susceptible to activational cleavage which may be carried out by another protease or by autocleavage. As to expression, produced in the male accessory glands and secreted into seminal fluid. In mated females, confined to the reproductive tract and also detected in eggs laid by mated females (at protein level).

The protein localises to the secreted. Seminal fluid metalloprotease which is transferred to females during mating and is required for processing of two other seminal fluid proteins Acp26Aa and Acp36DE in mated females. This is Seminal metalloprotease 1 from Drosophila melanogaster (Fruit fly).